A 558-amino-acid polypeptide reads, in one-letter code: Dihydroxy-acid dehydratase (558 aa).

A [2Fe-2S] cluster-binding site is contributed by Cys54. Asp86 is a Mg(2+) binding site. Residue Cys127 participates in [2Fe-2S] cluster binding. Asp128 and Lys129 together coordinate Mg(2+). Lys129 is subject to N6-carboxylysine. Cys199 lines the [2Fe-2S] cluster pocket. Mg(2+) is bound at residue Glu448. The active-site Proton acceptor is Ser474.

Belongs to the IlvD/Edd family. In terms of assembly, homodimer. Requires [2Fe-2S] cluster as cofactor. It depends on Mg(2+) as a cofactor.

It catalyses the reaction (2R)-2,3-dihydroxy-3-methylbutanoate = 3-methyl-2-oxobutanoate + H2O. It carries out the reaction (2R,3R)-2,3-dihydroxy-3-methylpentanoate = (S)-3-methyl-2-oxopentanoate + H2O. The protein operates within amino-acid biosynthesis; L-isoleucine biosynthesis; L-isoleucine from 2-oxobutanoate: step 3/4. Its pathway is amino-acid biosynthesis; L-valine biosynthesis; L-valine from pyruvate: step 3/4. Its function is as follows. Functions in the biosynthesis of branched-chain amino acids. Catalyzes the dehydration of (2R,3R)-2,3-dihydroxy-3-methylpentanoate (2,3-dihydroxy-3-methylvalerate) into 2-oxo-3-methylpentanoate (2-oxo-3-methylvalerate) and of (2R)-2,3-dihydroxy-3-methylbutanoate (2,3-dihydroxyisovalerate) into 2-oxo-3-methylbutanoate (2-oxoisovalerate), the penultimate precursor to L-isoleucine and L-valine, respectively. This Acidothermus cellulolyticus (strain ATCC 43068 / DSM 8971 / 11B) protein is Dihydroxy-acid dehydratase.